Reading from the N-terminus, the 71-residue chain is Pro-glucagon (71 aa).

Belongs to the glucagon family.

The protein localises to the secreted. In terms of biological role, plays a key role in glucose metabolism and homeostasis. Regulates blood glucose by increasing gluconeogenesis and decreasing glycolysis. The polypeptide is Pro-glucagon (gcg) (Ictalurus punctatus (Channel catfish)).